We begin with the raw amino-acid sequence, 398 residues long: DNA-directed RNA polymerase III subunit RPC4 (398 aa).

The disordered stretch occupies residues 1-114; that stretch reads MSEGNAAGEP…SHSIFEQGPA (114 aa). Serine 2 bears the N-acetylserine mark. A Phosphoserine modification is found at serine 42. The segment covering 66 to 100 has biased composition (basic and acidic residues); the sequence is KIKEEPKEEVTVKKEKRERDRDRQREGHGRGRGRP. Glycyl lysine isopeptide (Lys-Gly) (interchain with G-Cter in SUMO2) cross-links involve residues lysine 68 and lysine 78. Arginine 95, arginine 97, and arginine 99 each carry omega-N-methylarginine. Glycyl lysine isopeptide (Lys-Gly) (interchain with G-Cter in SUMO2) cross-links involve residues lysine 141, lysine 152, lysine 160, lysine 190, lysine 199, lysine 206, lysine 220, lysine 285, lysine 302, lysine 310, and lysine 396. Residues 220-244 are disordered; the sequence is KEEPRDEEEEAKMKAPPKAARKTPG.

It belongs to the eukaryotic RPC4/POLR3D RNA polymerase subunit family. Component of the RNA polymerase III complex consisting of 17 subunits: a ten-subunit horseshoe-shaped catalytic core composed of POLR3A/RPC1, POLR3B/RPC2, POLR1C/RPAC1, POLR1D/RPAC2, POLR3K/RPC10, POLR2E/RPABC1, POLR2F/RPABC2, POLR2H/RPABC3, POLR2K/RPABC4 and POLR2L/RPABC5; a mobile stalk composed of two subunits POLR3H/RPC8 and CRCP/RPC9, protruding from the core and functioning primarily in transcription initiation; and additional subunits homologous to general transcription factors of the RNA polymerase II machinery, POLR3C/RPC3-POLR3F/RPC6-POLR3G/RPC7 heterotrimer required for transcription initiation and POLR3D/RPC4-POLR3E/RPC5 heterodimer involved in both transcription initiation and termination. Post-translationally, sumoylation on Lys-141 can serve as a signal to mark misfolded Pol III for proteasomal degradation.

Its subcellular location is the nucleus. Its function is as follows. DNA-dependent RNA polymerase catalyzes the transcription of DNA into RNA using the four ribonucleoside triphosphates as substrates. Specific peripheric component of RNA polymerase III (Pol III) which synthesizes small non-coding RNAs including 5S rRNA, snRNAs, tRNAs and miRNAs from at least 500 distinct genomic loci. Assembles with POLR3E/RPC5 forming a subcomplex that binds the Pol III core. Enables recruitment of Pol III at transcription initiation site and drives transcription initiation from both type 2 and type 3 DNA promoters. Required for efficient transcription termination and reinitiation. Pol III plays a key role in sensing and limiting infection by intracellular bacteria and DNA viruses. Acts as nuclear and cytosolic DNA sensor involved in innate immune response. Can sense non-self dsDNA that serves as template for transcription into dsRNA. The non-self RNA polymerase III transcripts, such as Epstein-Barr virus-encoded RNAs (EBERs) induce type I interferon and NF-kappa-B through the RIG-I pathway. The protein is DNA-directed RNA polymerase III subunit RPC4 of Homo sapiens (Human).